The primary structure comprises 325 residues: GPI-linked NAD(P)(+)--arginine ADP-ribosyltransferase 1 (325 aa).

The N-terminal stretch at 1–22 (MKIPAMMSLLLVSVGLRDGVQV) is a signal peptide. 2 disulfide bridges follow: Cys53–Cys272 and Cys169–Cys219. A glycan (N-linked (GlcNAc...) asparagine) is linked at Asn65. The 196-residue stretch at 73–268 (KVYADGWAQA…IYLRALGKRS (196 aa)) folds into the TR mART core domain. NAD(+) is bound by residues Tyr117 and Arg174. Active-site residues include Arg174 and Ser197. Residue Ser228 participates in NAD(+) binding. The active site involves Glu235. An N-linked (GlcNAc...) asparagine glycan is attached at Asn248. Ser290 is lipidated: GPI-anchor amidated serine. A propeptide spans 291–325 (APGSISASCSLLLLLLFLVLSALPENPGLQQLTRC) (removed in mature form).

It belongs to the Arg-specific ADP-ribosyltransferase family. As to expression, abundantly expressed in cardiac and skeletal muscle. Low levels also found in lung.

The protein localises to the sarcoplasmic reticulum membrane. It catalyses the reaction L-arginyl-[protein] + NAD(+) = N(omega)-(ADP-D-ribosyl)-L-arginyl-[protein] + nicotinamide + H(+). Functionally, has ADP-ribosyltransferase activity toward GLP1R. In Mus musculus (Mouse), this protein is GPI-linked NAD(P)(+)--arginine ADP-ribosyltransferase 1 (Art1).